The chain runs to 646 residues: Cytochrome b translation regulator cbp8 (646 aa).

Component of a complex, at least composed of cbp7 and cbp8.

It localises to the mitochondrion. In terms of biological role, translation factor for cob1/cytochrome b; plays a role in cob1 mRNA stabilization and required for correct folding of the protein. The protein is Cytochrome b translation regulator cbp8 of Schizosaccharomyces pombe (strain 972 / ATCC 24843) (Fission yeast).